A 457-amino-acid chain; its full sequence is MQKYISEARLLLALAIPVILAQIAQTAMGFVDTVMAGGYSATDMAAVAIGTSIWLPAILFGHGLLLALTPVIAQLNGSGRRERIAHQVRQGFWLAGFVSVLIMLVLWNAGYIIRSMQNIDPALADKAVGYLRALLWGAPGYLFFQVARNQCEGLAKTKPGMVMGFIGLLVNIPVNYIFIYGHFGMPELGGVGCGVATAAVYWVMFLAMVSYIKRARSMRDIRNEKGTAKPDPAVMKRLIQLGLPIALALFFEVTLFAVVALLVSPLGIVDVAGHQIALNFSSLMFVLPMSLAAAVTIRVGYRLGQGSTLDAQTAARTGLMVGVCMATLTAIFTVSLREQIALLYNDNPEVVTLAAHLMLLAAVYQISDSIQVIGSGILRGYKDTRSIFYITFTAYWVLGLPSGYILALTDLVVEPMGPAGFWIGFIIGLTSAAIMMMLRMRFLQRLPSAIILQRAAR.

12 helical membrane-spanning segments follow: residues 11–31, 53–73, 93–113, 127–147, 160–180, 189–209, 243–263, 276–296, 314–334, 350–370, 387–407, and 418–438; these read LLAL…MGFV, IWLP…PVIA, WLAG…GYII, AVGY…FQVA, GMVM…IFIY, GGVG…LAMV, LPIA…ALLV, IALN…AAVT, AART…IFTV, VVTL…SDSI, IFYI…YILA, and PAGF…MMML.

Belongs to the multi antimicrobial extrusion (MATE) (TC 2.A.66.1) family. MdtK subfamily.

It is found in the cell inner membrane. Functionally, multidrug efflux pump that functions probably as a Na(+)/drug antiporter. The sequence is that of Multidrug resistance protein MdtK from Escherichia coli O45:K1 (strain S88 / ExPEC).